The following is a 699-amino-acid chain: DNA ligase (699 aa).

The interval 1 to 29 (MSDADVDAESNPYLRDPPTEFEPAESLSR) is disordered. Residues 60 to 64 (DAAYD), 108 to 109 (SI), and E137 contribute to the NAD(+) site. Catalysis depends on K139, which acts as the N6-AMP-lysine intermediate. NAD(+)-binding residues include R160, E196, K311, and K335. C425, C428, C441, and C447 together coordinate Zn(2+). A BRCT domain is found at 613 to 666 (SGGDELDGLTFVVTGTLAASRSDVTELVESHGGNVTGSVSGNTDYLVVGENPGR).

This sequence belongs to the NAD-dependent DNA ligase family. LigA subfamily. Mg(2+) is required as a cofactor. Requires Mn(2+) as cofactor.

It carries out the reaction NAD(+) + (deoxyribonucleotide)n-3'-hydroxyl + 5'-phospho-(deoxyribonucleotide)m = (deoxyribonucleotide)n+m + AMP + beta-nicotinamide D-nucleotide.. With respect to regulation, displays maximal in vitro activity at high salt levels. DNA ligase that catalyzes the formation of phosphodiester linkages between 5'-phosphoryl and 3'-hydroxyl groups in double-stranded DNA using NAD as a coenzyme and as the energy source for the reaction. It is essential for DNA replication and repair of damaged DNA. This Haloferax volcanii (strain ATCC 29605 / DSM 3757 / JCM 8879 / NBRC 14742 / NCIMB 2012 / VKM B-1768 / DS2) (Halobacterium volcanii) protein is DNA ligase.